The primary structure comprises 240 residues: Myogenic factor 6 (240 aa).

A bHLH domain is found at 91 to 142 (DRRKAATLRERRRLKKINEAFEALKRRTVANPNQRLPKVEILRSAINYIERL).

In terms of assembly, efficient DNA binding requires dimerization with another bHLH protein. In terms of tissue distribution, skeletal muscle.

It is found in the nucleus. Functionally, involved in muscle differentiation (myogenic factor). Induces fibroblasts to differentiate into myoblasts. Probable sequence specific DNA-binding protein. The polypeptide is Myogenic factor 6 (myf6) (Xenopus laevis (African clawed frog)).